The sequence spans 83 residues: Alpha-toxin CvIV4 (83 aa).

Positions 1–19 (MNYFILILVAALLILDVNC) are cleaved as a signal peptide. An LCN-type CS-alpha/beta domain is found at 21–79 (KDGYPVEHSGCKYTCWKNEYCDKVCKDLKGEGGYCYINLTCWCTGLPDNVPLKTNQRCN). Cystine bridges form between C31/C78, C35/C55, C41/C61, and C45/C63.

It belongs to the long (4 C-C) scorpion toxin superfamily. Sodium channel inhibitor family. In terms of tissue distribution, expressed by the venom gland.

It localises to the secreted. In terms of biological role, this toxin significantly slows the fast inactivation of Nav1.2/SCN2A (EC(50)=580 nM), Nav1.3/SCN3A (EC(50)=1310 nM), Nav1.4/SCN4A (EC(50)=530 nM), and Nav1.7/SCN9A (EC(50)=1340 nM). The toxin does not affect the peak amplitude of Nav1.7 currents. On all channels cited above, the toxin requires depolarizing potentials to slow channel inactivation. In addition, the toxin has no or very weak effects on the voltage-dependence of steady-state inactivation, and on voltage-dependence of activation. In vivo, it produces paw licking in mice equivalent to the effects of whole venom. The protein is Alpha-toxin CvIV4 of Centruroides vittatus (Striped bark scorpion).